Here is a 553-residue protein sequence, read N- to C-terminus: Hydroxylamine reductase (553 aa).

Cys3, Cys6, Cys18, and Cys25 together coordinate [2Fe-2S] cluster. His252, Glu276, Cys320, Cys408, Cys436, Cys461, Glu495, and Lys497 together coordinate hybrid [4Fe-2O-2S] cluster. The residue at position 408 (Cys408) is a Cysteine persulfide.

The protein belongs to the HCP family. Requires [2Fe-2S] cluster as cofactor. Hybrid [4Fe-2O-2S] cluster serves as cofactor.

It is found in the cytoplasm. It catalyses the reaction A + NH4(+) + H2O = hydroxylamine + AH2 + H(+). Functionally, catalyzes the reduction of hydroxylamine to form NH(3) and H(2)O. This chain is Hydroxylamine reductase, found in Vibrio parahaemolyticus serotype O3:K6 (strain RIMD 2210633).